We begin with the raw amino-acid sequence, 431 residues long: MTWLSGLYSIFVASAAFCSLGLILVAVILLSRKFLIKVHPCKLKINNDDSLTKTVDSGKTLLSSLLDSGIAIPSPCGGKAACKQCKVRITKNADEPLETDRSTFSKQQLEQGWRLSCQTKVQHDLCLEVEERYFNASSWEGTVVSNENVATFIKELVLSVDPSRPIPFKPGGYLQITVPPYKTNTSDWKQTMDPQYYSDWETFHLFDQIIDNLSLDTDSANKAYSLASYPAELPLIKFNVRIATPPFVDQAPDPTIPWGVCSSYIFSLKPGDKVMVSGPYGESFMKEDNRPVIFLIGGAGSSFGRSHILDLLLNKHSDRELTLWYGARSLKENIYQEEYEKLEKEFPNFHYHLVLSQPLQEDLDQGWDKNDPIKTNFLFKAFELGQLSHLPNPEDYLYYVCGPALHNSSILTLLDNYGVERSSIVLDDFGS.

A helical transmembrane segment spans residues 10-30 (IFVASAAFCSLGLILVAVILL). A 2Fe-2S ferredoxin-type domain is found at 41–133 (CKLKINNDDS…DLCLEVEERY (93 aa)). [2Fe-2S] cluster is bound by residues C76, C82, C85, and C117. In terms of domain architecture, FAD-binding FR-type spans 136–286 (ASSWEGTVVS…SGPYGESFMK (151 aa)). The tract at residues 289 to 413 (NRPVIFLIGG…ALHNSSILTL (125 aa)) is catalytic.

Belongs to the NqrF family. In terms of assembly, composed of six subunits; NqrA, NqrB, NqrC, NqrD, NqrE and NqrF. The cofactor is [2Fe-2S] cluster. FAD serves as cofactor.

Its subcellular location is the cell inner membrane. The catalysed reaction is a ubiquinone + n Na(+)(in) + NADH + H(+) = a ubiquinol + n Na(+)(out) + NAD(+). NQR complex catalyzes the reduction of ubiquinone-1 to ubiquinol by two successive reactions, coupled with the transport of Na(+) ions from the cytoplasm to the periplasm. The first step is catalyzed by NqrF, which accepts electrons from NADH and reduces ubiquinone-1 to ubisemiquinone by a one-electron transfer pathway. This chain is Na(+)-translocating NADH-quinone reductase subunit F, found in Chlamydia trachomatis serovar D (strain ATCC VR-885 / DSM 19411 / UW-3/Cx).